The sequence spans 78 residues: Small ribosomal subunit protein bS18 (78 aa).

The protein belongs to the bacterial ribosomal protein bS18 family. In terms of assembly, part of the 30S ribosomal subunit. Forms a tight heterodimer with protein bS6.

Binds as a heterodimer with protein bS6 to the central domain of the 16S rRNA, where it helps stabilize the platform of the 30S subunit. This is Small ribosomal subunit protein bS18 from Limosilactobacillus fermentum (strain NBRC 3956 / LMG 18251) (Lactobacillus fermentum).